A 208-amino-acid chain; its full sequence is Ribosomal RNA large subunit methyltransferase E (208 aa).

Gly-63, Trp-65, Asp-83, Asp-99, and Asp-124 together coordinate S-adenosyl-L-methionine. Lys-164 functions as the Proton acceptor in the catalytic mechanism.

This sequence belongs to the class I-like SAM-binding methyltransferase superfamily. RNA methyltransferase RlmE family.

The protein localises to the cytoplasm. It carries out the reaction uridine(2552) in 23S rRNA + S-adenosyl-L-methionine = 2'-O-methyluridine(2552) in 23S rRNA + S-adenosyl-L-homocysteine + H(+). Functionally, specifically methylates the uridine in position 2552 of 23S rRNA at the 2'-O position of the ribose in the fully assembled 50S ribosomal subunit. This is Ribosomal RNA large subunit methyltransferase E from Blochmanniella pennsylvanica (strain BPEN).